We begin with the raw amino-acid sequence, 1451 residues long: Murinoglobulin-2 (1451 aa).

The first 27 residues, 1-27 (MWKSRRAQLCLFSVLLAFLPSASSLNG), serve as a signal peptide directing secretion. Cystine bridges form between Cys-48–Cys-86, Cys-251–Cys-276, and Cys-269–Cys-288. Asn-55 carries an N-linked (GlcNAc...) asparagine glycan. Asn-294, Asn-313, and Asn-500 each carry an N-linked (GlcNAc...) asparagine glycan. 3 cysteine pairs are disulfide-bonded: Cys-461-Cys-555, Cys-587-Cys-773, and Cys-634-Cys-680. A bait region region spans residues 677-734 (PKICFDSAPMSGPRGKFDLAFSSEVSGTLQKGSSKRPQPEEPPREDPPPKDPLAETIR). A disordered region spans residues 703 to 728 (GTLQKGSSKRPQPEEPPREDPPPKDP). The span at 713-728 (PQPEEPPREDPPPKDP) shows a compositional bias: basic and acidic residues. 3 N-linked (GlcNAc...) asparagine glycosylation sites follow: Asn-749, Asn-776, and Asn-871. Disulfide bonds link Cys-849–Cys-885, Cys-923–Cys-1274, Cys-1081–Cys-1104, and Cys-1298–Cys-1444. Residues 974-977 (CGEQ) constitute a cross-link (isoglutamyl cysteine thioester (Cys-Gln)). Asn-1401 is a glycosylation site (N-linked (GlcNAc...) asparagine).

The protein belongs to the protease inhibitor I39 (alpha-2-macroglobulin) family. As to quaternary structure, monomer. As to expression, plasma.

It localises to the secreted. A proteinase activates the inhibitor by specific proteolysis in the bait region, which, by an unknown mechanism leads to reaction at the cysteinyl-glutamyl internal thiol ester site and to a conformational change, whereby the proteinase is trapped and/or covalently bound to the inhibitor. While in the tetrameric proteinase inhibitors steric inhibition is sufficiently strong, monomeric forms need a covalent linkage between the activated glutamyl residue of the original thiol ester and a terminal amino group of a lysine or another nucleophilic group on the proteinase, for inhibition to be effective. This Mus musculus (Mouse) protein is Murinoglobulin-2 (Mug2).